We begin with the raw amino-acid sequence, 727 residues long: Zinc metalloproteinase nas-38 (727 aa).

Positions methionine 1–alanine 25 are cleaved as a signal peptide. A propeptide spanning residues alanine 26–lysine 114 is cleaved from the precursor. One can recognise a Peptidase M12A domain in the interval arginine 113–threonine 312. Cystine bridges form between cysteine 158–cysteine 311 and cysteine 179–cysteine 199. Histidine 207 provides a ligand contact to Zn(2+). Glutamate 208 is a catalytic residue. Zn(2+) is bound by residues histidine 211 and histidine 217. The EGF-like domain occupies asparagine 306 to cysteine 345. An N-linked (GlcNAc...) asparagine glycan is attached at asparagine 330. The CUB domain maps to alanine 353–asparagine 469. 2 disulfides stabilise this stretch: cysteine 355–cysteine 383 and cysteine 411–cysteine 432. Disordered regions lie at residues proline 473–threonine 506 and threonine 532–serine 561. A compositionally biased stretch (low complexity) spans threonine 535–threonine 554. Positions glutamate 610 to proline 658 constitute a TSP type-1 domain. Intrachain disulfides connect cysteine 611–cysteine 644, cysteine 623–cysteine 652, cysteine 627–cysteine 657, and cysteine 639–cysteine 644. N-linked (GlcNAc...) asparagine glycans are attached at residues asparagine 653 and asparagine 714.

Zn(2+) is required as a cofactor. In terms of tissue distribution, expressed in the epidermis, the excretory canal cell, duct cell, pore cell, and excretory gland cell. Expressed in an oscillating pattern in epithelial cells with increased expression during the lethargus phase which occurs during molting between larval and adult stages. Not expressed in seam cells or in the RIS neuron.

It is found in the secreted. In terms of biological role, metalloprotease. As part of the innate immune response to molting and injury to the adult epidermis, positively regulates the activity of the transcription factor sta-2 to promote the expression of epidermal antimicrobial peptides such as nlp-29. Through regulating the expression of epidermal antimicrobial peptides such as nlp-29, modulates sleep duration and locomotion quiescence during the sleep-like state called lethargus which occurs during molting between larval and adult stages. This may occur through the sleep-active RIS neuron. The protein is Zinc metalloproteinase nas-38 of Caenorhabditis elegans.